Here is a 273-residue protein sequence, read N- to C-terminus: Dermonecrotic toxin LspiSicTox-betaIE1ii (273 aa).

Residue His5 is part of the active site. Glu25 and Asp27 together coordinate Mg(2+). Residue His41 is the Nucleophile of the active site. Cystine bridges form between Cys45/Cys51 and Cys47/Cys189. Asp85 is a binding site for Mg(2+).

It belongs to the arthropod phospholipase D family. Class II subfamily. The cofactor is Mg(2+). In terms of tissue distribution, expressed by the venom gland.

The protein resides in the secreted. It carries out the reaction an N-(acyl)-sphingosylphosphocholine = an N-(acyl)-sphingosyl-1,3-cyclic phosphate + choline. The enzyme catalyses an N-(acyl)-sphingosylphosphoethanolamine = an N-(acyl)-sphingosyl-1,3-cyclic phosphate + ethanolamine. The catalysed reaction is a 1-acyl-sn-glycero-3-phosphocholine = a 1-acyl-sn-glycero-2,3-cyclic phosphate + choline. It catalyses the reaction a 1-acyl-sn-glycero-3-phosphoethanolamine = a 1-acyl-sn-glycero-2,3-cyclic phosphate + ethanolamine. Its function is as follows. Dermonecrotic toxins cleave the phosphodiester linkage between the phosphate and headgroup of certain phospholipids (sphingolipid and lysolipid substrates), forming an alcohol (often choline) and a cyclic phosphate. This toxin acts on sphingomyelin (SM). It may also act on ceramide phosphoethanolamine (CPE), lysophosphatidylcholine (LPC) and lysophosphatidylethanolamine (LPE), but not on lysophosphatidylserine (LPS), and lysophosphatidylglycerol (LPG). It acts by transphosphatidylation, releasing exclusively cyclic phosphate products as second products. Induces dermonecrosis, hemolysis, increased vascular permeability, edema, inflammatory response, and platelet aggregation. This Loxosceles spinulosa (Recluse spider) protein is Dermonecrotic toxin LspiSicTox-betaIE1ii.